The sequence spans 319 residues: HPr kinase/phosphorylase (319 aa).

Catalysis depends on residues histidine 141 and lysine 162. 156–163 (GNSGVGKS) contacts ATP. Serine 163 contributes to the Mg(2+) binding site. Aspartate 180 acts as the Proton acceptor; for phosphorylation activity. Proton donor; for dephosphorylation activity in catalysis. The segment at 204–213 (MEIRGIGIID) is important for the catalytic mechanism of both phosphorylation and dephosphorylation. Residue glutamate 205 participates in Mg(2+) binding. Arginine 246 is a catalytic residue. The interval 267–272 (PVKVGR) is important for the catalytic mechanism of dephosphorylation.

It belongs to the HPrK/P family. As to quaternary structure, homohexamer. It depends on Mg(2+) as a cofactor.

It carries out the reaction [HPr protein]-L-serine + ATP = [HPr protein]-O-phospho-L-serine + ADP + H(+). The catalysed reaction is [HPr protein]-O-phospho-L-serine + phosphate + H(+) = [HPr protein]-L-serine + diphosphate. In terms of biological role, catalyzes the ATP- as well as the pyrophosphate-dependent phosphorylation of a specific serine residue in HPr, a phosphocarrier protein of the phosphoenolpyruvate-dependent sugar phosphotransferase system (PTS). HprK/P also catalyzes the pyrophosphate-producing, inorganic phosphate-dependent dephosphorylation (phosphorolysis) of seryl-phosphorylated HPr (P-Ser-HPr). The two antagonistic activities of HprK/P are regulated by several intracellular metabolites, which change their concentration in response to the absence or presence of rapidly metabolisable carbon sources (glucose, fructose, etc.) in the growth medium. Therefore, by controlling the phosphorylation state of HPr, HPrK/P is a sensor enzyme that plays a major role in the regulation of carbon metabolism and sugar transport: it mediates carbon catabolite repression (CCR), and regulates PTS-catalyzed carbohydrate uptake and inducer exclusion. In Lactobacillus gasseri (strain ATCC 33323 / DSM 20243 / BCRC 14619 / CIP 102991 / JCM 1131 / KCTC 3163 / NCIMB 11718 / NCTC 13722 / AM63), this protein is HPr kinase/phosphorylase.